We begin with the raw amino-acid sequence, 455 residues long: UPF0053 protein MT1890 (455 aa).

The CNNM transmembrane domain maps to 2–205 (NLTDTVATIL…ARSGALDDAT (204 aa)). 4 helical membrane passes run 6–26 (TVAT…FVAA), 68–88 (LGIS…VAEL), 106–126 (LITF…GELV), and 148–168 (LFSL…NWIV). CBS domains lie at 224–285 (MTPR…AHTL) and 286–346 (LTTV…VRDE).

The protein belongs to the UPF0053 family.

Its subcellular location is the cell membrane. This is UPF0053 protein MT1890 from Mycobacterium tuberculosis (strain CDC 1551 / Oshkosh).